Consider the following 224-residue polypeptide: ATP-dependent dethiobiotin synthetase BioD (224 aa).

12-17 (EVGKTV) is a binding site for ATP. T16 contacts Mg(2+). K34 is a catalytic residue. Residue T38 coordinates substrate. ATP contacts are provided by residues D47, 106–109 (EGAG), 166–167 (GS), and 196–198 (PEG). Residues D47 and E106 each contribute to the Mg(2+) site.

The protein belongs to the dethiobiotin synthetase family. Homodimer. It depends on Mg(2+) as a cofactor.

The protein resides in the cytoplasm. It carries out the reaction (7R,8S)-7,8-diammoniononanoate + CO2 + ATP = (4R,5S)-dethiobiotin + ADP + phosphate + 3 H(+). It functions in the pathway cofactor biosynthesis; biotin biosynthesis; biotin from 7,8-diaminononanoate: step 1/2. Catalyzes a mechanistically unusual reaction, the ATP-dependent insertion of CO2 between the N7 and N8 nitrogen atoms of 7,8-diaminopelargonic acid (DAPA, also called 7,8-diammoniononanoate) to form a ureido ring. In Saccharopolyspora erythraea (strain ATCC 11635 / DSM 40517 / JCM 4748 / NBRC 13426 / NCIMB 8594 / NRRL 2338), this protein is ATP-dependent dethiobiotin synthetase BioD.